A 193-amino-acid chain; its full sequence is 7-methyl-GTP pyrophosphatase (193 aa).

D70 (proton acceptor) is an active-site residue.

This sequence belongs to the Maf family. YceF subfamily. A divalent metal cation is required as a cofactor.

It is found in the cytoplasm. It carries out the reaction N(7)-methyl-GTP + H2O = N(7)-methyl-GMP + diphosphate + H(+). Nucleoside triphosphate pyrophosphatase that hydrolyzes 7-methyl-GTP (m(7)GTP). May have a dual role in cell division arrest and in preventing the incorporation of modified nucleotides into cellular nucleic acids. The protein is 7-methyl-GTP pyrophosphatase of Vibrio cholerae serotype O1 (strain ATCC 39315 / El Tor Inaba N16961).